A 1364-amino-acid polypeptide reads, in one-letter code: DNA-directed RNA polymerase subunit beta' (1364 aa).

Residues cysteine 250, cysteine 317, cysteine 324, and cysteine 327 each coordinate Zn(2+). A disordered region spans residues threonine 1318–lysine 1342.

The protein belongs to the RNA polymerase beta' chain family. RpoC2 subfamily. As to quaternary structure, in cyanobacteria the RNAP catalytic core is composed of 2 alpha, 1 beta, 1 beta', 1 gamma and 1 omega subunit. When a sigma factor is associated with the core the holoenzyme is formed, which can initiate transcription. It depends on Zn(2+) as a cofactor.

The enzyme catalyses RNA(n) + a ribonucleoside 5'-triphosphate = RNA(n+1) + diphosphate. Functionally, DNA-dependent RNA polymerase catalyzes the transcription of DNA into RNA using the four ribonucleoside triphosphates as substrates. The chain is DNA-directed RNA polymerase subunit beta' from Synechococcus sp. (strain CC9902).